Reading from the N-terminus, the 360-residue chain is Dihydroorotate dehydrogenase (quinone) (360 aa).

FMN contacts are provided by residues 66-70 and Thr90; that span reads AGFDK. Lys70 provides a ligand contact to substrate. Residue 115-119 coordinates substrate; sequence NRMGF. Positions 143 and 176 each coordinate FMN. Position 176 (Asn176) interacts with substrate. The Nucleophile role is filled by Ser179. Asn181 provides a ligand contact to substrate. FMN is bound by residues Lys212 and Thr240. A substrate-binding site is contributed by 241–242; that stretch reads NT. FMN is bound by residues Gly264, Gly293, and 314 to 315; that span reads YT.

The protein belongs to the dihydroorotate dehydrogenase family. Type 2 subfamily. Monomer. FMN is required as a cofactor.

The protein localises to the cell membrane. The enzyme catalyses (S)-dihydroorotate + a quinone = orotate + a quinol. The protein operates within pyrimidine metabolism; UMP biosynthesis via de novo pathway; orotate from (S)-dihydroorotate (quinone route): step 1/1. Its function is as follows. Catalyzes the conversion of dihydroorotate to orotate with quinone as electron acceptor. The chain is Dihydroorotate dehydrogenase (quinone) from Mycobacterium marinum (strain ATCC BAA-535 / M).